Reading from the N-terminus, the 393-residue chain is Elongation factor Tu (393 aa).

The 199-residue stretch at 6–204 (KPHINVGTIG…ALEKIELPMR (199 aa)) folds into the tr-type G domain. Positions 15-22 (GHVDHGKT) are G1. 15–22 (GHVDHGKT) is a GTP binding site. Mg(2+) is bound at residue threonine 22. The G2 stretch occupies residues 58–62 (GITIS). Positions 79-82 (DCPG) are G3. Residues 79-83 (DCPGH) and 134-137 (NKCD) contribute to the GTP site. The tract at residues 134–137 (NKCD) is G4. A G5 region spans residues 172–174 (SAV).

Belongs to the TRAFAC class translation factor GTPase superfamily. Classic translation factor GTPase family. EF-Tu/EF-1A subfamily. Monomer.

The protein resides in the cytoplasm. The catalysed reaction is GTP + H2O = GDP + phosphate + H(+). GTP hydrolase that promotes the GTP-dependent binding of aminoacyl-tRNA to the A-site of ribosomes during protein biosynthesis. This Anaplasma phagocytophilum (strain HZ) protein is Elongation factor Tu.